The primary structure comprises 355 residues: Ubiquinone biosynthesis protein COQ4 homolog, mitochondrial (355 aa).

Zn(2+)-binding residues include histidine 134, aspartate 135, histidine 138, and glutamate 150.

This sequence belongs to the COQ4 family. Component of a multi-subunit COQ enzyme complex. Zn(2+) is required as a cofactor.

It is found in the mitochondrion inner membrane. It carries out the reaction a 4-hydroxy-3-methoxy-5-(all-trans-polyprenyl)benzoate + H(+) = a 2-methoxy-6-(all-trans-polyprenyl)phenol + CO2. Its pathway is cofactor biosynthesis; ubiquinone biosynthesis. Lyase that catalyzes the C1-decarboxylation of 4-hydroxy-3-methoxy-5-(all-trans-polyprenyl)benzoic acid into 2-methoxy-6-(all-trans-polyprenyl)phenol during ubiquinone biosynthesis. The sequence is that of Ubiquinone biosynthesis protein COQ4 homolog, mitochondrial from Plasmodium yoelii yoelii.